We begin with the raw amino-acid sequence, 959 residues long: Isoleucine--tRNA ligase (959 aa).

A 'HIGH' region motif is present at residues 60–70 (PYANGSLHMGH). Glu-569 provides a ligand contact to L-isoleucyl-5'-AMP. The short motif at 610–614 (KMSKS) is the 'KMSKS' region element. An ATP-binding site is contributed by Lys-613. Cys-928, Cys-931, Cys-948, and Cys-951 together coordinate Zn(2+).

It belongs to the class-I aminoacyl-tRNA synthetase family. IleS type 1 subfamily. As to quaternary structure, monomer. Zn(2+) is required as a cofactor.

The protein localises to the cytoplasm. The catalysed reaction is tRNA(Ile) + L-isoleucine + ATP = L-isoleucyl-tRNA(Ile) + AMP + diphosphate. In terms of biological role, catalyzes the attachment of isoleucine to tRNA(Ile). As IleRS can inadvertently accommodate and process structurally similar amino acids such as valine, to avoid such errors it has two additional distinct tRNA(Ile)-dependent editing activities. One activity is designated as 'pretransfer' editing and involves the hydrolysis of activated Val-AMP. The other activity is designated 'posttransfer' editing and involves deacylation of mischarged Val-tRNA(Ile). This is Isoleucine--tRNA ligase from Rippkaea orientalis (strain PCC 8801 / RF-1) (Cyanothece sp. (strain PCC 8801)).